A 2153-amino-acid polypeptide reads, in one-letter code: Genome polyprotein (2153 aa).

Gly-2 carries N-myristoyl glycine; by host lipidation. Positions 213 to 240 (HTHPGQSGHQIRGPSQSNDRSGGKPDED) are disordered. Positions 216 to 232 (PGQSGHQIRGPSQSNDR) are enriched in polar residues. Residues 565–584 (ELQNNDDPVENFVESTLKEV) form an amphipathic alpha-helix region. Residues His-864 and Asp-880 each act as for protease 2A activity in the active site. Zn(2+)-binding residues include Cys-897 and Cys-899. Residue Cys-951 is the For protease 2A activity of the active site. Zn(2+) is bound by residues Cys-957 and His-959. The tract at residues 1088-1158 (SDSWLRKFTE…GFSSASSEAQ (71 aa)) is membrane-binding. Positions 1088 to 1224 (SDSWLRKFTE…NPGCGKSLVT (137 aa)) are oligomerization. An RNA-binding region spans residues 1109-1113 (SIKIG). In terms of domain architecture, SF3 helicase spans 1187-1346 (TKIQKDLKQL…FRNTTGLLDV (160 aa)). 1214 to 1221 (GNPGCGKS) contributes to the ATP binding site. Zn(2+) is bound by residues Cys-1353, Cys-1365, and Cys-1370. The segment at 1353–1370 (CTGCPKPAHYKTCCPLLC) adopts a C4-type; degenerate zinc-finger fold. Residues 1397-1404 (ENATRKKV) are RNA-binding. The interval 1408–1413 (LDAIFQ) is oligomerization. An intramembrane segment occupies 1460 to 1480 (VHYMLNCLGSLIIILGTVYAL). Tyr-1491 is modified (O-(5'-phospho-RNA)-tyrosine). A Peptidase C3 domain is found at 1511-1689 (GPEHEFVRAL…YGAALLRKYF (179 aa)). Catalysis depends on for protease 3C activity residues His-1550, Glu-1581, and Cys-1657. The region spanning 1920 to 2033 (GELLAFDYTN…SYPFELDPME (114 aa)) is the RdRp catalytic domain. Asp-1926 and Asp-2019 together coordinate Mg(2+).

Belongs to the picornaviruses polyprotein family. As to quaternary structure, interacts with capsid protein VP1 and capsid protein VP3 to form heterotrimeric protomers. In terms of assembly, interacts with capsid protein VP0, and capsid protein VP3 to form heterotrimeric protomers. Five protomers subsequently associate to form pentamers which serve as building blocks for the capsid. Interacts with capsid protein VP2, capsid protein VP3 and capsid protein VP4 following cleavage of capsid protein VP0. Interacts (via C-terminus) with capsid protein VP4 (via C-terminus). Interacts with host CDHR3 (via N-terminus); this interaction occurs near each threefold vertex of the capsid and allows the virus attachment and entry into the host cell. Interacts with capsid protein VP1 and capsid protein VP3 in the mature capsid. Interacts with host CDHR3 (via N-terminus); this interaction occurs near each threefold vertex of the capsid and allows the virus attachment and entry into the host cell. As to quaternary structure, interacts with capsid protein VP0 and capsid protein VP1 to form heterotrimeric protomers. Five protomers subsequently associate to form pentamers which serve as building blocks for the capsid. Interacts with capsid protein VP4 in the mature capsid. Interacts with protein 2C; this interaction may be important for virion morphogenesis. Interacts with host CDHR3 (via N-terminus); this interaction occurs near each threefold vertex of the capsid and allows the virus attachment and entry into the host cell. In terms of assembly, interacts (via C-terminus) with capsid protein VP1 (via C-terminus). Interacts with capsid protein VP3. Homodimer. As to quaternary structure, homohexamer; forms a hexameric ring structure with 6-fold symmetry characteristic of AAA+ ATPases. Interacts (via N-terminus) with host RTN3 (via reticulon domain); this interaction is important for viral replication. Interacts with capsid protein VP3; this interaction may be important for virion morphogenesis. In terms of assembly, interacts with protein 3CD. Homodimer. Interacts with host GBF1. Interacts (via GOLD domain) with host ACBD3 (via GOLD domain); this interaction allows the formation of a viral protein 3A/ACBD3 heterotetramer with a 2:2 stoichiometry, which will stimulate the recruitment of host PI4KB in order to synthesize PI4P at the viral RNA replication sites. As to quaternary structure, interacts with RNA-directed RNA polymerase. In terms of assembly, interacts with protein 3AB and with RNA-directed RNA polymerase. Interacts with Viral protein genome-linked and with protein 3CD. Requires Mg(2+) as cofactor. Specific enzymatic cleavages in vivo by the viral proteases yield processing intermediates and the mature proteins. In terms of processing, myristoylation is required for the formation of pentamers during virus assembly. Further assembly of 12 pentamers and a molecule of genomic RNA generates the provirion. Post-translationally, during virion maturation, immature virions are rendered infectious following cleavage of VP0 into VP4 and VP2. This maturation seems to be an autocatalytic event triggered by the presence of RNA in the capsid and it is followed by a conformational change infectious virion. Myristoylation is required during RNA encapsidation and formation of the mature virus particle. In terms of processing, VPg is uridylylated by the polymerase into VPg-pUpU. This acts as a nucleotide-peptide primer for the genomic RNA replication.

Its subcellular location is the virion. It localises to the host cytoplasm. It is found in the host cytoplasmic vesicle membrane. The protein resides in the host nucleus. It catalyses the reaction a ribonucleoside 5'-triphosphate + H2O = a ribonucleoside 5'-diphosphate + phosphate + H(+). It carries out the reaction Selective cleavage of Gln-|-Gly bond in the poliovirus polyprotein. In other picornavirus reactions Glu may be substituted for Gln, and Ser or Thr for Gly.. The catalysed reaction is Selective cleavage of Tyr-|-Gly bond in the picornavirus polyprotein.. The enzyme catalyses RNA(n) + a ribonucleoside 5'-triphosphate = RNA(n+1) + diphosphate. With respect to regulation, replication or transcription is subject to high level of random mutations by the nucleotide analog ribavirin. Forms an icosahedral capsid of pseudo T=3 symmetry with capsid proteins VP2 and VP3. The capsid is 300 Angstroms in diameter, composed of 60 copies of each capsid protein and enclosing the viral positive strand RNA genome. Capsid protein VP1 mainly forms the vertices of the capsid. The VP1 C-termini form 60 dominant spike-like protrusions on the surface of the virion. Capsid protein VP1 interacts with host cell receptor CDHR3 to provide virion attachment to target host cells. This attachment induces virion internalization. Tyrosine kinases are probably involved in the entry process. After binding to its receptor, the capsid undergoes conformational changes. Capsid protein VP1 N-terminus (that contains an amphipathic alpha-helix) and capsid protein VP4 are externalized. Together, they shape a pore in the host membrane through which viral genome is translocated to host cell cytoplasm. In terms of biological role, forms an icosahedral capsid of pseudo T=3 symmetry with capsid proteins VP2 and VP3. The capsid is 300 Angstroms in diameter, composed of 60 copies of each capsid protein and enclosing the viral positive strand RNA genome. Functionally, lies on the inner surface of the capsid shell. After binding to the host receptor, the capsid undergoes conformational changes. Capsid protein VP4 is released, Capsid protein VP1 N-terminus is externalized, and together, they shape a pore in the host membrane through which the viral genome is translocated into the host cell cytoplasm. Its function is as follows. Component of immature procapsids, which is cleaved into capsid proteins VP4 and VP2 after maturation. Allows the capsid to remain inactive before the maturation step. Cysteine protease that cleaves viral polyprotein and specific host proteins. It is responsible for the autocatalytic cleavage between the P1 and P2 regions, which is the first cleavage occurring in the polyprotein. Also cleaves the host translation initiation factor EIF4G1, in order to shut down the capped cellular mRNA translation. Inhibits the host nucleus-cytoplasm protein and RNA trafficking by cleaving host members of the nuclear pores. Counteracts stress granule formation probably by antagonizing its assembly or promoting its dissassembly. In terms of biological role, plays an essential role in the virus replication cycle by acting as a viroporin. Creates a pore in the host endoplasmic reticulum and as a consequence releases Ca2+ in the cytoplasm of infected cell. In turn, high levels of cytoplasmic calcium may trigger membrane trafficking and transport of viral ER-associated proteins to viroplasms, sites of viral genome replication. Functionally, induces and associates with structural rearrangements of intracellular membranes. Displays RNA-binding, nucleotide binding and NTPase activities. May play a role in virion morphogenesis and viral RNA encapsidation by interacting with the capsid protein VP3. Its function is as follows. Localizes the viral replication complex to the surface of membranous vesicles. Together with protein 3CD binds the Cis-Active RNA Element (CRE) which is involved in RNA synthesis initiation. Acts as a cofactor to stimulate the activity of 3D polymerase, maybe through a nucleid acid chaperone activity. Localizes the viral replication complex to the surface of membranous vesicles. It inhibits host cell endoplasmic reticulum-to-Golgi apparatus transport and causes the disassembly of the Golgi complex, possibly through GBF1 interaction. This would result in depletion of MHC, trail receptors and IFN receptors at the host cell surface. Plays an essential role in viral RNA replication by recruiting ACBD3 and PI4KB at the viral replication sites, thereby allowing the formation of the rearranged membranous structures where viral replication takes place. In terms of biological role, acts as a primer for viral RNA replication and remains covalently bound to viral genomic RNA. VPg is uridylylated prior to priming replication into VPg-pUpU. The oriI viral genomic sequence may act as a template for this. The VPg-pUpU is then used as primer on the genomic RNA poly(A) by the RNA-dependent RNA polymerase to replicate the viral genome. During genome replication, the VPg-RNA linkage is removed by the host TDP2, thereby accelerating replication. During the late stage of the replication cycle, host TDP2 is excluded from sites of viral RNA synthesis and encapsidation, allowing for the generation of progeny virions. Functionally, involved in the viral replication complex and viral polypeptide maturation. It exhibits protease activity with a specificity and catalytic efficiency that is different from protease 3C. Protein 3CD lacks polymerase activity. Protein 3CD binds to the 5'UTR of the viral genome. Its function is as follows. Major viral protease that mediates proteolytic processing of the polyprotein. Cleaves host EIF5B, contributing to host translation shutoff. Also cleaves host PABPC1, contributing to host translation shutoff. Replicates the viral genomic RNA on the surface of intracellular membranes. May form linear arrays of subunits that propagate along a strong head-to-tail interaction called interface-I. Covalently attaches UMP to a tyrosine of VPg, which is used to prime RNA synthesis. The positive stranded RNA genome is first replicated at virus induced membranous vesicles, creating a dsRNA genomic replication form. This dsRNA is then used as template to synthesize positive stranded RNA genomes. ss(+)RNA genomes are either translated, replicated or encapsidated. This Homo sapiens (Human) protein is Genome polyprotein.